Here is a 311-residue protein sequence, read N- to C-terminus: Dihydroorotate dehydrogenase A (fumarate) (311 aa).

FMN-binding positions include S19 and 43–44 (KS). Substrate-binding positions include K43, 67–71 (NSMGL), and N127. N127 lines the FMN pocket. C130 (nucleophile) is an active-site residue. FMN is bound by residues K164 and V192. 193–194 (NS) lines the substrate pocket. FMN-binding positions include G221, 249 to 250 (GG), and 271 to 272 (GT).

Belongs to the dihydroorotate dehydrogenase family. Type 1 subfamily. In terms of assembly, homodimer. Requires FMN as cofactor.

Its subcellular location is the cytoplasm. It catalyses the reaction (S)-dihydroorotate + fumarate = orotate + succinate. It functions in the pathway pyrimidine metabolism; UMP biosynthesis via de novo pathway. Functionally, catalyzes the conversion of dihydroorotate to orotate with fumarate as the electron acceptor. This is Dihydroorotate dehydrogenase A (fumarate) (pyrDA) from Lactococcus lactis subsp. lactis (strain IL1403) (Streptococcus lactis).